Here is a 197-residue protein sequence, read N- to C-terminus: uncharacterized protein (197 aa).

6 helical membrane-spanning segments follow: residues 5–23, 27–46, 55–77, 87–109, 116–138, and 153–174; these read LNLLIFFIAALLIALGLRF, ISFAGLILLLAVVPALMLRF, VIAGIFVLGLALNALIGVALAYT, LSLLPLTLVLTANVFATSLVIRI, VFAFYFWFLISVGLAFLFLLPTG, and FVEFPILYSELALIPSAFCLVF.

It localises to the cell membrane. This is an uncharacterized protein from Archaeoglobus fulgidus (strain ATCC 49558 / DSM 4304 / JCM 9628 / NBRC 100126 / VC-16).